Here is a 397-residue protein sequence, read N- to C-terminus: Cysteine desulfurase IscS (397 aa).

Residues 72-73 (GS), N152, Q180, and 200-202 (SAH) contribute to the pyridoxal 5'-phosphate site. K203 carries the N6-(pyridoxal phosphate)lysine modification. A pyridoxal 5'-phosphate-binding site is contributed by T238. The Cysteine persulfide intermediate role is filled by C328. Residue C328 coordinates [2Fe-2S] cluster.

This sequence belongs to the class-V pyridoxal-phosphate-dependent aminotransferase family. NifS/IscS subfamily. In terms of assembly, homodimer. Forms a heterotetramer with IscU, interacts with other sulfur acceptors. It depends on pyridoxal 5'-phosphate as a cofactor.

It is found in the cytoplasm. The enzyme catalyses (sulfur carrier)-H + L-cysteine = (sulfur carrier)-SH + L-alanine. It participates in cofactor biosynthesis; iron-sulfur cluster biosynthesis. Its function is as follows. Master enzyme that delivers sulfur to a number of partners involved in Fe-S cluster assembly, tRNA modification or cofactor biosynthesis. Catalyzes the removal of elemental sulfur atoms from cysteine to produce alanine. Functions as a sulfur delivery protein for Fe-S cluster synthesis onto IscU, an Fe-S scaffold assembly protein, as well as other S acceptor proteins. This is Cysteine desulfurase IscS from Clostridium botulinum (strain Kyoto / Type A2).